Reading from the N-terminus, the 356-residue chain is SERTA domain-containing protein 4 (356 aa).

The interval 33-53 (SYGGPSPPGPAQAPLQGDRGA) is disordered. The SERTA domain maps to 101-147 (IFEERAHILYMSLEKLKFIDDPEVYLRRSVLINNLMKRIHGEIIMQN). The span at 215-232 (TAASSPSASSSSSSSSSS) shows a compositional bias: low complexity. 3 disordered regions span residues 215–238 (TAASSPSASSSSSSSSSSPPLPLP), 280–302 (KLNDEKANDDTNRDGGPLSHEPV), and 332–356 (WKKSLRKKEASPPSNKLCCSKGSKI). Positions 280 to 292 (KLNDEKANDDTNR) are enriched in basic and acidic residues.

The polypeptide is SERTA domain-containing protein 4 (SERTAD4) (Homo sapiens (Human)).